The sequence spans 331 residues: Lipoyl synthase (331 aa).

[4Fe-4S] cluster contacts are provided by C60, C65, C71, C86, C90, C93, and S301. The region spanning 72-290 (WSRGTATFML…REEGMQLGFL (219 aa)) is the Radical SAM core domain.

This sequence belongs to the radical SAM superfamily. Lipoyl synthase family. The cofactor is [4Fe-4S] cluster.

The protein localises to the cytoplasm. It carries out the reaction [[Fe-S] cluster scaffold protein carrying a second [4Fe-4S](2+) cluster] + N(6)-octanoyl-L-lysyl-[protein] + 2 oxidized [2Fe-2S]-[ferredoxin] + 2 S-adenosyl-L-methionine + 4 H(+) = [[Fe-S] cluster scaffold protein] + N(6)-[(R)-dihydrolipoyl]-L-lysyl-[protein] + 4 Fe(3+) + 2 hydrogen sulfide + 2 5'-deoxyadenosine + 2 L-methionine + 2 reduced [2Fe-2S]-[ferredoxin]. It functions in the pathway protein modification; protein lipoylation via endogenous pathway; protein N(6)-(lipoyl)lysine from octanoyl-[acyl-carrier-protein]: step 2/2. Its function is as follows. Catalyzes the radical-mediated insertion of two sulfur atoms into the C-6 and C-8 positions of the octanoyl moiety bound to the lipoyl domains of lipoate-dependent enzymes, thereby converting the octanoylated domains into lipoylated derivatives. The chain is Lipoyl synthase from Deinococcus radiodurans (strain ATCC 13939 / DSM 20539 / JCM 16871 / CCUG 27074 / LMG 4051 / NBRC 15346 / NCIMB 9279 / VKM B-1422 / R1).